Consider the following 119-residue polypeptide: Large ribosomal subunit protein bL20 (119 aa).

This sequence belongs to the bacterial ribosomal protein bL20 family.

Functionally, binds directly to 23S ribosomal RNA and is necessary for the in vitro assembly process of the 50S ribosomal subunit. It is not involved in the protein synthesizing functions of that subunit. The chain is Large ribosomal subunit protein bL20 from Nitrobacter winogradskyi (strain ATCC 25391 / DSM 10237 / CIP 104748 / NCIMB 11846 / Nb-255).